Here is a 367-residue protein sequence, read N- to C-terminus: Apolipoprotein A-V (367 aa).

The N-terminal stretch at methionine 1–alanine 20 is a signal peptide. Serine 52 carries the post-translational modification Phosphoserine. Positions threonine 231–phenylalanine 255 form a coiled coil. The tract at residues glutamate 305–lysine 332 is disordered.

This sequence belongs to the apolipoprotein A1/A4/E family. In terms of assembly, interacts with GPIHBP1. Interacts with SORL1; this interaction leads to APOA5 internalization and sorting either to lysosomes and degradation, or to the trans-Golgi network. Phosphorylated by FAM20C in the extracellular medium. As to expression, liver.

It is found in the secreted. It localises to the early endosome. Its subcellular location is the late endosome. The protein localises to the golgi apparatus. The protein resides in the trans-Golgi network. In terms of biological role, minor apolipoprotein mainly associated with HDL and to a lesser extent with VLDL. May also be associated with chylomicrons. Important determinant of plasma triglyceride (TG) levels by both being a potent stimulator of apo-CII lipoprotein lipase (LPL) TG hydrolysis and an inhibitor of the hepatic VLDL-TG production rate (without affecting the VLDL-apoB production rate). Activates poorly lecithin:cholesterol acyltransferase (LCAT) and does not enhance efflux of cholesterol from macrophages. Binds heparin. This Rattus norvegicus (Rat) protein is Apolipoprotein A-V (Apoa5).